The primary structure comprises 1487 residues: Major viral transcription factor ICP4 homolog (1487 aa).

Disordered regions lie at residues 41 to 295 (AAPD…LPPG), 310 to 370 (LAKT…AEEA), and 803 to 1007 (PPTR…HTPR). Positions 66–75 (VIPPPSPAPE) are enriched in pro residues. 2 stretches are compositionally biased toward low complexity: residues 165–193 (PSSA…SSSS) and 201–213 (DGAG…SSSS). Positions 214-224 (DDSDSDEGGEE) are enriched in acidic residues. A compositionally biased stretch (low complexity) spans 235–272 (AAKTPSAAGSPGPSSGGDRPAAGAATPKSCRSGAASPG). The segment covering 273–285 (APAPAPASAPAPS) has biased composition (pro residues). Composition is skewed to low complexity over residues 807 to 829 (SQQP…AEGS), 849 to 860 (PSSHSQSPQHSQ), and 867 to 877 (ATTATCCRATQ). Polar residues predominate over residues 878 to 893 (TNARSRGQQHQPQKAR). Over residues 920-929 (HGRPRGKSGK) the composition is skewed to basic residues. A compositionally biased stretch (low complexity) spans 938–951 (AAQAGASASFSSSA). Residues 988–1007 (GPDRRGGFRRVPRGDCHTPR) are compositionally biased toward basic and acidic residues.

The protein belongs to the herpesviridae ICP4 family. Post-translationally, a long stretch of serine residues may be a major site of phosphorylation.

It localises to the host nucleus. This IE protein is a multifunctional protein capable of migrating to the nucleus, binding to DNA, trans-activating other viral genes, and autoregulating its own synthesis. The sequence is that of Major viral transcription factor ICP4 homolog (IE) from Equus caballus (Horse).